Reading from the N-terminus, the 202-residue chain is UPF0301 protein Meso_0753 (202 aa).

It belongs to the UPF0301 (AlgH) family.

This chain is UPF0301 protein Meso_0753, found in Chelativorans sp. (strain BNC1).